Reading from the N-terminus, the 600-residue chain is NADH-quinone oxidoreductase subunit C/D (600 aa).

The interval 1-190 is NADH dehydrogenase I subunit C; sequence MVNNMTDLTA…SPFELTKAKQ (190 aa). Positions 214 to 600 are NADH dehydrogenase I subunit D; it reads DFMFLNLGPN…IDFVMSDVDR (387 aa).

This sequence in the N-terminal section; belongs to the complex I 30 kDa subunit family. In the C-terminal section; belongs to the complex I 49 kDa subunit family. In terms of assembly, NDH-1 is composed of 13 different subunits. Subunits NuoB, CD, E, F, and G constitute the peripheral sector of the complex.

The protein resides in the cell inner membrane. It catalyses the reaction a quinone + NADH + 5 H(+)(in) = a quinol + NAD(+) + 4 H(+)(out). NDH-1 shuttles electrons from NADH, via FMN and iron-sulfur (Fe-S) centers, to quinones in the respiratory chain. The immediate electron acceptor for the enzyme in this species is believed to be ubiquinone. Couples the redox reaction to proton translocation (for every two electrons transferred, four hydrogen ions are translocated across the cytoplasmic membrane), and thus conserves the redox energy in a proton gradient. This Escherichia coli (strain ATCC 8739 / DSM 1576 / NBRC 3972 / NCIMB 8545 / WDCM 00012 / Crooks) protein is NADH-quinone oxidoreductase subunit C/D.